Reading from the N-terminus, the 241-residue chain is tRNA (guanine-N(1)-)-methyltransferase (241 aa).

S-adenosyl-L-methionine contacts are provided by residues Gly112 and 131–136 (LGDFVL).

The protein belongs to the RNA methyltransferase TrmD family. Homodimer.

It localises to the cytoplasm. It carries out the reaction guanosine(37) in tRNA + S-adenosyl-L-methionine = N(1)-methylguanosine(37) in tRNA + S-adenosyl-L-homocysteine + H(+). Its function is as follows. Specifically methylates guanosine-37 in various tRNAs. The polypeptide is tRNA (guanine-N(1)-)-methyltransferase (Clostridium novyi (strain NT)).